Here is a 252-residue protein sequence, read N- to C-terminus: Hydroxyacylglutathione hydrolase (252 aa).

The Zn(2+) site is built by histidine 54, histidine 56, aspartate 58, histidine 59, histidine 111, aspartate 128, and histidine 166.

It belongs to the metallo-beta-lactamase superfamily. Glyoxalase II family. Monomer. It depends on Zn(2+) as a cofactor.

The catalysed reaction is an S-(2-hydroxyacyl)glutathione + H2O = a 2-hydroxy carboxylate + glutathione + H(+). Its pathway is secondary metabolite metabolism; methylglyoxal degradation; (R)-lactate from methylglyoxal: step 2/2. Thiolesterase that catalyzes the hydrolysis of S-D-lactoyl-glutathione to form glutathione and D-lactic acid. The polypeptide is Hydroxyacylglutathione hydrolase (Aliivibrio fischeri (strain ATCC 700601 / ES114) (Vibrio fischeri)).